The sequence spans 104 residues: ATP synthase subunit c (104 aa).

Transmembrane regions (helical) follow at residues 31-51 and 75-95; these read SVVAAGIGLGLAALGGAIGMG and MFIALAMIEAQVIYALVVAMI.

This sequence belongs to the ATPase C chain family. As to quaternary structure, F-type ATPases have 2 components, F(1) - the catalytic core - and F(0) - the membrane proton channel. F(1) has five subunits: alpha(3), beta(3), gamma(1), delta(1), epsilon(1). F(0) has three main subunits: a(1), b(2) and c(10-14). The alpha and beta chains form an alternating ring which encloses part of the gamma chain. F(1) is attached to F(0) by a central stalk formed by the gamma and epsilon chains, while a peripheral stalk is formed by the delta and b chains.

It localises to the cell inner membrane. Its function is as follows. F(1)F(0) ATP synthase produces ATP from ADP in the presence of a proton or sodium gradient. F-type ATPases consist of two structural domains, F(1) containing the extramembraneous catalytic core and F(0) containing the membrane proton channel, linked together by a central stalk and a peripheral stalk. During catalysis, ATP synthesis in the catalytic domain of F(1) is coupled via a rotary mechanism of the central stalk subunits to proton translocation. In terms of biological role, key component of the F(0) channel; it plays a direct role in translocation across the membrane. A homomeric c-ring of between 10-14 subunits forms the central stalk rotor element with the F(1) delta and epsilon subunits. The chain is ATP synthase subunit c from Aliarcobacter butzleri (strain RM4018) (Arcobacter butzleri).